Consider the following 581-residue polypeptide: MKSHIQSLLEQTIESFKQQGILPADFEARIQVDRTKDKSHGDLATNLAMMLTKAAGKNPRELAQLIIDNLPASAYVAKVEIAGPGFINFFIDDSALANQLQAAISDEHLGIKLPTPQTIVVDYSSPNLAKEMHVGHLRSTIIGDSVVRTLEFLGHKVIRQNHVGDWGTQFGMLLAYMEELRAQNGEQAQLELSDLETFYRAAKLRFDESAEFATRARQLVVELQSGDEYCNKLWREFNDISLSHCHEVYERLGVSLTRADVHGESAYNADLEQVVKDLDAQGLLTQSNGAKVVFQEEFRNKEGEALPVIIQKADGGYLYATTDLAAMRYRSSVLKADRVLYFVDLRQALHFQQVFSLAKLAKFVRNDMSLEHLGFGTMNGEDGRPFKTRTGGVVKLVDLLDEANTRALELVRSKNPDMDEATLAEIARVVGISAVKYADLSKNRTSDYIFSFEQMLSFEGNTAPYLLYAYTRVAGIFKRATDIDLSQAKIVLEHEKEKDLGNKLAQFGEILSRVVDKGQPHVLCGYLYELAGAFSSFYEACPVLAADNDEQKHSRLLLSQLTANTLQKGLNLLGIETLERM.

A 'HIGH' region motif is present at residues 126–136 (PNLAKEMHVGH).

It belongs to the class-I aminoacyl-tRNA synthetase family. In terms of assembly, monomer.

The protein resides in the cytoplasm. The catalysed reaction is tRNA(Arg) + L-arginine + ATP = L-arginyl-tRNA(Arg) + AMP + diphosphate. This is Arginine--tRNA ligase from Shewanella sp. (strain MR-7).